Consider the following 378-residue polypeptide: Quinolinate synthase (378 aa).

Residues histidine 59 and serine 80 each contribute to the iminosuccinate site. Cysteine 125 lines the [4Fe-4S] cluster pocket. Residues 151-153 and serine 168 contribute to the iminosuccinate site; that span reads YAN. [4Fe-4S] cluster is bound at residue cysteine 212. Iminosuccinate-binding positions include 238–240 and threonine 255; that span reads HPE. Cysteine 309 is a [4Fe-4S] cluster binding site.

Belongs to the quinolinate synthase family. Type 1 subfamily. Requires [4Fe-4S] cluster as cofactor.

The protein resides in the cytoplasm. It catalyses the reaction iminosuccinate + dihydroxyacetone phosphate = quinolinate + phosphate + 2 H2O + H(+). It participates in cofactor biosynthesis; NAD(+) biosynthesis; quinolinate from iminoaspartate: step 1/1. Catalyzes the condensation of iminoaspartate with dihydroxyacetone phosphate to form quinolinate. This is Quinolinate synthase from Burkholderia orbicola (strain MC0-3).